The primary structure comprises 156 residues: Small ribosomal subunit protein uS10m (156 aa).

This sequence belongs to the universal ribosomal protein uS10 family.

The protein resides in the mitochondrion. In terms of biological role, ribosomal protein required for normal mitochondrial function and normal larval development. Thought to have a role in insulin/IGF signaling. In Caenorhabditis elegans, this protein is Small ribosomal subunit protein uS10m (mrps-10).